We begin with the raw amino-acid sequence, 1149 residues long: FH2 domain-containing protein 1 (1149 aa).

4 disordered regions span residues 18-79 (LATA…PPPG), 464-540 (NHDR…SRLS), 554-660 (ESAT…PLLP), and 681-1149 (SPKS…PLQK). Composition is skewed to pro residues over residues 33-48 (ASPP…PPCP) and 56-79 (PSPP…PPPG). Positions 88–483 (GYSSLGKKKR…QLQRQKEMEQ (396 aa)) constitute an FH2 domain. Basic and acidic residues predominate over residues 464 to 485 (NHDREEQERKQLQRQKEMEQKR). Residues 486–504 (YSWSTGELGSFGRSSSEND) show a composition bias toward polar residues. S501 carries the phosphoserine modification. Low complexity predominate over residues 522-532 (PRPNSPSYRPP). Polar residues-rich tracts occupy residues 554 to 575 (ESAT…SSPR) and 591 to 604 (SHGP…QASK). A phosphoserine mark is found at S645 and S655. Positions 681 to 693 (SPKSLEEGSQLTL) are enriched in polar residues. The span at 784-795 (MDSRAGGDKQEE) shows a compositional bias: basic and acidic residues. The span at 801–822 (GSVSSGAGEAGSSQVSSNSVSS) shows a compositional bias: low complexity. A compositionally biased stretch (basic and acidic residues) spans 844–856 (PKDRPSRGKDAIA). Residues 926-947 (ETPSSTDTPLSRRSSVRGTSDT) are compositionally biased toward polar residues. The MTBD; microtubule-binding domain stretch occupies residues 960–1086 (EEPRLPRSSG…VKGGSEDSAS (127 aa)). Positions 965–974 (PRSSGSISGR) are enriched in low complexity. Polar residues-rich tracts occupy residues 1042–1052 (ARNTVASSSRS) and 1064–1074 (TGLTRTVSQRQ). Residues 1123–1134 (GTTERSSLRLKD) show a composition bias toward basic and acidic residues.

In terms of assembly, interacts with CEP170. In terms of tissue distribution, brain, heart and lung (at protein level).

It localises to the golgi apparatus. The protein resides in the cell projection. Its subcellular location is the cilium. Functionally, microtubule-associated formin which regulates both actin and microtubule dynamics. Induces microtubule acetylation and stabilization and actin stress fiber formation. Regulates Golgi ribbon formation. Required for normal cilia assembly. Early in cilia assembly, may assist in the maturation and positioning of the centrosome/basal body, and once cilia assembly has initiated, may also promote cilia elongation by inhibiting disassembly. The sequence is that of FH2 domain-containing protein 1 (Fhdc1) from Mus musculus (Mouse).